An 89-amino-acid polypeptide reads, in one-letter code: Elongation factor 1-beta (89 aa).

This sequence belongs to the EF-1-beta/EF-1-delta family.

In terms of biological role, promotes the exchange of GDP for GTP in EF-1-alpha/GDP, thus allowing the regeneration of EF-1-alpha/GTP that could then be used to form the ternary complex EF-1-alpha/GTP/AAtRNA. In Methanococcoides burtonii (strain DSM 6242 / NBRC 107633 / OCM 468 / ACE-M), this protein is Elongation factor 1-beta.